The primary structure comprises 74 residues: Omwaprin-b (74 aa).

A signal peptide spans 1–24 (MSSGGLLLLLGLLTLWEVLTPVSS). Residues 27-71 (RPKKPGLCPPRPQKPCVKECKNDWSCPGQQKCCNYGCIDECRDPI) form the WAP domain. 4 disulfides stabilise this stretch: Cys-34-Cys-59, Cys-42-Cys-63, Cys-46-Cys-58, and Cys-52-Cys-67.

Belongs to the venom waprin family. Expressed by the venom gland.

It is found in the secreted. Functionally, damages membranes of susceptible bacteria. Has antibacterial activity against the Gram-positive bacteria B.megaterium and S.warneri. After 45 minutes of treatment with this protein, B.megaterium have no visible pili and are smooth. Has no antibacterial activity against the Gram-positive bacteria B.thuringiensis, S.aureus, S.clavuligerus and B. anthracis, or the Gram-negative bacteria E.coli and A.tumefaciens. Has no hemolytic activity. Does not inhibit the proteinases elastase and cathepsin G. Is not toxic to mice. In Oxyuranus microlepidotus (Inland taipan), this protein is Omwaprin-b.